Consider the following 624-residue polypeptide: MSDNQSWNSSGSEEDPETESGPPVERCGVLSKWTNYIHGWQDRWVVLKNNTLSYYKSEDETEYGCRGSICLSKAVITPHDFDECRFDISVNDSVWYLRAQDPEHRQQWVDAIEQHKTESGYGSESSLRRHGSMVSLVSGASGYSATSTSSFKKGHSLREKLAEMETFRDILCRQVDTLQKYFDVCADAVSKDELQRDKVVEDDEDDFPTTRSDGDFLHNTNGNKEKLFPHVTPKGINGIDFKGEAITFKATTAGILATLSHCIELMVKREESWQKRHDREVEKRRRVEEAYKNVMEELKKKPRFGGPDYEEGPNSLINEEEFFDAVEAALDRQDKIEEQSQSEKVRLHWPTSLPSGDTFSSVGTHRFVQKPYSRSSSMSSIDLVSASDDVHRFSSQVEEMVQNHMNYSLQDVGGDANWQLVVEEGEMKVYRREVEENGIVLDPLKATHAVKGVTGHEVCNYFWNVDVRNDWETTIENFHVVETLADNAIIVYQTHKRVWPASQRDVLYLSAIRKIPALTENDPETWIVCNFSVDHDSAPLNNRCVRAKINIAMICQTLVSPPEGDQEISRDNILCKITYVANVNPGGWAPASVLRAVAKREYPKFLKRFTSYVQEKTAGKPILF.

The span at Met-1–Gly-11 shows a compositional bias: polar residues. Residues Met-1–Val-24 form a disordered region. The region spanning Pro-23 to Thr-117 is the PH domain. Residues Ser-126, Ser-132, and Ser-135 each carry the phosphoserine modification. The segment at Asp-202–Asn-221 is disordered. A coiled-coil region spans residues Ile-263–Arg-303. Phosphoserine is present on Ser-315. Positions Glu-321–Glu-327 match the FFAT motif. Position 372 is a phosphotyrosine (Tyr-372). Phosphoserine is present on residues Ser-373, Ser-377, and Ser-380. The START domain maps to Asp-389 to Ala-618. Positions 472, 493, 530, and 579 each coordinate an N-acylsphing-4-enine.

Interacts with VAPA and VAPB. Interaction with VAPB is less efficient than with VAPA. Interacts (via FFAT motif) with MOSPD2 (via MSP domain). Post-translationally, phosphorylation on Ser-132 decreases the affinity toward phosphatidylinositol 4-phosphate at Golgi membranes and reduces ceramide transfer activity. Inactivated by hyperphosphorylation of serine residues by CSNK1G2/CK1 that triggers dissociation from the Golgi complex, thus down-regulating ER-to-Golgi transport of ceramide and sphingomyelin synthesis.

The protein resides in the cytoplasm. The protein localises to the golgi apparatus. It is found in the endoplasmic reticulum. It carries out the reaction N-hexadecanoylsphing-4-enine(in) = N-hexadecanoylsphing-4-enine(out). Its function is as follows. Shelters ceramides and diacylglycerol lipids inside its START domain and mediates the intracellular trafficking of ceramides and diacylglycerol lipids in a non-vesicular manner. In Mus musculus (Mouse), this protein is Ceramide transfer protein (Cert1).